The chain runs to 333 residues: uncharacterized protein (333 aa).

This is an uncharacterized protein from Caenorhabditis elegans.